A 369-amino-acid polypeptide reads, in one-letter code: D-alanine--D-alanine ligase (369 aa).

In terms of domain architecture, ATP-grasp spans 152–359 (KKLFAAEGLP…YPSLLATMVE (208 aa)). 180 to 235 (RERLGLPVFVKPARGGSSIGVSRVSSWDELDAAVAAARDHDPKVIVEAAIAGRELE) is a binding site for ATP. Mg(2+) is bound by residues Asp-314, Glu-326, and Asn-328.

It belongs to the D-alanine--D-alanine ligase family. It depends on Mg(2+) as a cofactor. The cofactor is Mn(2+).

The protein resides in the cytoplasm. It catalyses the reaction 2 D-alanine + ATP = D-alanyl-D-alanine + ADP + phosphate + H(+). The protein operates within cell wall biogenesis; peptidoglycan biosynthesis. Functionally, cell wall formation. In Mycolicibacterium paratuberculosis (strain ATCC BAA-968 / K-10) (Mycobacterium paratuberculosis), this protein is D-alanine--D-alanine ligase.